The following is a 316-amino-acid chain: NADH-quinone oxidoreductase subunit H (316 aa).

A run of 8 helical transmembrane segments spans residues 6 to 26 (PAVV…LIWV), 74 to 94 (FVIA…VVPF), 98 to 118 (VGVI…SLAV), 145 to 165 (ISYE…AGSF), 177 to 197 (GWYV…AVAE), 233 to 253 (YLGI…GWLG), 256 to 276 (FLPP…FFIL), and 296 to 316 (VMLP…LSVP).

Belongs to the complex I subunit 1 family. In terms of assembly, NDH-1 is composed of 14 different subunits. Subunits NuoA, H, J, K, L, M, N constitute the membrane sector of the complex.

It is found in the cell inner membrane. The catalysed reaction is a quinone + NADH + 5 H(+)(in) = a quinol + NAD(+) + 4 H(+)(out). In terms of biological role, NDH-1 shuttles electrons from NADH, via FMN and iron-sulfur (Fe-S) centers, to quinones in the respiratory chain. The immediate electron acceptor for the enzyme in this species is believed to be ubiquinone. Couples the redox reaction to proton translocation (for every two electrons transferred, four hydrogen ions are translocated across the cytoplasmic membrane), and thus conserves the redox energy in a proton gradient. This subunit may bind ubiquinone. In Methylococcus capsulatus (strain ATCC 33009 / NCIMB 11132 / Bath), this protein is NADH-quinone oxidoreductase subunit H.